We begin with the raw amino-acid sequence, 118 residues long: Large ribosomal subunit protein bL20 (118 aa).

The protein belongs to the bacterial ribosomal protein bL20 family.

Binds directly to 23S ribosomal RNA and is necessary for the in vitro assembly process of the 50S ribosomal subunit. It is not involved in the protein synthesizing functions of that subunit. The sequence is that of Large ribosomal subunit protein bL20 from Gluconobacter oxydans (strain 621H) (Gluconobacter suboxydans).